The primary structure comprises 264 residues: Thymidylate synthase (264 aa).

Residue arginine 21 participates in dUMP binding. Histidine 51 contacts (6R)-5,10-methylene-5,6,7,8-tetrahydrofolate. 126–127 (RR) contacts dUMP. Cysteine 146 (nucleophile) is an active-site residue. DUMP is bound by residues 166–169 (RSCD), asparagine 177, and 207–209 (HLY). Aspartate 169 lines the (6R)-5,10-methylene-5,6,7,8-tetrahydrofolate pocket. (6R)-5,10-methylene-5,6,7,8-tetrahydrofolate is bound at residue alanine 263.

Belongs to the thymidylate synthase family. Bacterial-type ThyA subfamily. In terms of assembly, homodimer.

It is found in the cytoplasm. The enzyme catalyses dUMP + (6R)-5,10-methylene-5,6,7,8-tetrahydrofolate = 7,8-dihydrofolate + dTMP. It functions in the pathway pyrimidine metabolism; dTTP biosynthesis. In terms of biological role, catalyzes the reductive methylation of 2'-deoxyuridine-5'-monophosphate (dUMP) to 2'-deoxythymidine-5'-monophosphate (dTMP) while utilizing 5,10-methylenetetrahydrofolate (mTHF) as the methyl donor and reductant in the reaction, yielding dihydrofolate (DHF) as a by-product. This enzymatic reaction provides an intracellular de novo source of dTMP, an essential precursor for DNA biosynthesis. The polypeptide is Thymidylate synthase (Salmonella arizonae (strain ATCC BAA-731 / CDC346-86 / RSK2980)).